A 620-amino-acid chain; its full sequence is UDP-glucose:protein N-beta-glucosyltransferase (620 aa).

The protein belongs to the glycosyltransferase 41 family.

The protein localises to the cytoplasm. The catalysed reaction is L-asparaginyl-[protein] + UDP-alpha-D-glucose = N(4)-(beta-D-glucosyl)-L-asparaginyl-[protein] + UDP + H(+). It functions in the pathway protein modification; protein glycosylation. Functionally, inverting glycosyltransferase that catalyzes the transfer of one glucose moiety from UDP-glucose to an asparagine residue in peptides and proteins containing the NX(S/T) motif, resulting in their modification with a beta-linked 1,N-glucose. Likely acts as a key component of a general protein glycosylation system. The sequence is that of UDP-glucose:protein N-beta-glucosyltransferase from Actinobacillus pleuropneumoniae serotype 5b (strain L20).